A 409-amino-acid chain; its full sequence is SPI-1 type 3 secretion system translocon protein SctB (409 aa).

A helical transmembrane segment spans residues 119-140 (ISGMSSSAVALLAAANTLMLTL). The segment covering 350-368 (ERSEQQISQVNNRVASTAS) has biased composition (polar residues). The segment at 350–378 (ERSEQQISQVNNRVASTASDEARESSRKS) is disordered.

It belongs to the SctB/SipC family. As to quaternary structure, the core secretion machinery of the T3SS is composed of approximately 20 different proteins, including cytoplasmic components, a base, an export apparatus and a needle. This subunit is involved in the formation of a pore, called the translocon, in host membrane.

The protein resides in the secreted. It is found in the host membrane. Functionally, component of the type III secretion system 1 (SPI-1 T3SS), also called injectisome, which is used to inject bacterial effector proteins into eukaryotic host cells. SipB/SctE1 and SipC/SctB1 are inserted into the host membrane where they form a pore and allow the translocation of effector proteins into the cytosol of target cells. The sequence is that of SPI-1 type 3 secretion system translocon protein SctB from Salmonella typhi.